The chain runs to 72 residues: Large ribosomal subunit protein bL28 (72 aa).

This sequence belongs to the bacterial ribosomal protein bL28 family.

The sequence is that of Large ribosomal subunit protein bL28 from Chlorobium luteolum (strain DSM 273 / BCRC 81028 / 2530) (Pelodictyon luteolum).